An 82-amino-acid polypeptide reads, in one-letter code: Large ribosomal subunit protein bL27 (82 aa).

Residues 1–26 form a disordered region; that stretch reads MAHKKGQGASRNGRDSESKRLGMKVG.

The protein belongs to the bacterial ribosomal protein bL27 family.

This is Large ribosomal subunit protein bL27 from Chlamydia felis (strain Fe/C-56) (Chlamydophila felis).